We begin with the raw amino-acid sequence, 186 residues long: Ribosome-recycling factor (186 aa).

This sequence belongs to the RRF family.

It localises to the cytoplasm. Its function is as follows. Responsible for the release of ribosomes from messenger RNA at the termination of protein biosynthesis. May increase the efficiency of translation by recycling ribosomes from one round of translation to another. The protein is Ribosome-recycling factor of Bordetella petrii (strain ATCC BAA-461 / DSM 12804 / CCUG 43448).